A 473-amino-acid chain; its full sequence is MAP kinase-activated protein kinase 5 (473 aa).

The 283-residue stretch at 22–304 (INWTQKLGAG…IEGVLDHPWL (283 aa)) folds into the Protein kinase domain. ATP-binding positions include 28–36 (LGAGISGPV) and Lys51. Phosphoserine; by PKA is present on Ser115. Residue Asp148 is the Proton acceptor of the active site. Thr182 carries the phosphothreonine; by MAPK11, MAPK14, MAPK4, MAPK6 and PKA modification. 2 positions are modified to phosphoserine: Ser212 and Ser354. Residues 409-440 (ENEDEKLNEVMQEAWKYNRECKLLRDALQSFS) are a coiled coil.

The protein belongs to the protein kinase superfamily. CAMK Ser/Thr protein kinase family. In terms of assembly, interacts with SQSTM1. Interacts with ERK3/MAPK6 and ERK4/MAPK4 (via FRIEDE motif); the interaction is direct. Interacts with YWHAE; the interaction prevents phosphorylation of HSP27/HSPB1 leading to disrupt F-actin polymerization. In terms of processing, phosphorylated on Thr-182 ERK3/MAPK6 or ERK4/MAPK4; which is the regulatory phosphorylation site and is located on the T-loop/loop 12, leading to activation. Phosphorylation at Thr-182 by p38-alpha/MAPK14, p38-beta/MAPK11 is subject to debate. Phosphorylated at Ser-115 by PKA/PRKACA, leading to localization to the cytoplasm. Autophosphorylated. Expressed ubiquitously.

It is found in the cytoplasm. The protein resides in the nucleus. It carries out the reaction L-seryl-[protein] + ATP = O-phospho-L-seryl-[protein] + ADP + H(+). The enzyme catalyses L-threonyl-[protein] + ATP = O-phospho-L-threonyl-[protein] + ADP + H(+). With respect to regulation, activated following phosphorylation at Thr-182 by p38-alpha/MAPK14, p38-beta/MAPK11, ERK2/MAPK1, ERK3/MAPK6, and ERK4/MAPK4. Activated by stress-related extracellular stimuli; such as H(2)O(2), arsenite, anisomycin TNF alpha and also PMA and the calcium ionophore A23187; but to a lesser extent. In vitro, activated by SQSTM1. Inhibited by diterpenoid alkaloid noroxoaconitine. Functionally, tumor suppressor serine/threonine-protein kinase involved in mTORC1 signaling and post-transcriptional regulation. Phosphorylates FOXO3, ERK3/MAPK6, ERK4/MAPK4, HSP27/HSPB1, p53/TP53 and RHEB. Acts as a tumor suppressor by mediating Ras-induced senescence and phosphorylating p53/TP53. Involved in post-transcriptional regulation of MYC by mediating phosphorylation of FOXO3: phosphorylation of FOXO3 leads to promote nuclear localization of FOXO3, enabling expression of miR-34b and miR-34c, 2 post-transcriptional regulators of MYC that bind to the 3'UTR of MYC transcript and prevent MYC translation. Acts as a negative regulator of mTORC1 signaling by mediating phosphorylation and inhibition of RHEB. Part of the atypical MAPK signaling via its interaction with ERK3/MAPK6 or ERK4/MAPK4: the precise role of the complex formed with ERK3/MAPK6 or ERK4/MAPK4 is still unclear, but the complex follows a complex set of phosphorylation events: upon interaction with atypical MAPK (ERK3/MAPK6 or ERK4/MAPK4), ERK3/MAPK6 (or ERK4/MAPK4) is phosphorylated and then mediates phosphorylation and activation of MAPKAPK5, which in turn phosphorylates ERK3/MAPK6 (or ERK4/MAPK4). Mediates phosphorylation of HSP27/HSPB1 in response to PKA/PRKACA stimulation, inducing F-actin rearrangement. This Mus musculus (Mouse) protein is MAP kinase-activated protein kinase 5 (Mapkapk5).